The chain runs to 131 residues: MVIDTSALVAMLSDEPDAERFEAAVEADHIRLMSTASYLETALVIEARFGEPGGRELDLWLHRAAVDLVAVHADQADAARAAYRTYGKGRHRAGLNYGDCFSYGLAKISGQPLLFKGEDFQHTDIATVALP.

The 129-residue stretch at methionine 1–alanine 129 folds into the PINc domain. Residues aspartate 4 and aspartate 99 each contribute to the Mg(2+) site.

The protein belongs to the PINc/VapC protein family. Requires Mg(2+) as cofactor.

In terms of biological role, toxic component of a type II toxin-antitoxin (TA) system. An RNase. Its toxic effect is neutralized by coexpression with cognate antitoxin VapB30. The sequence is that of Ribonuclease VapC30 from Mycobacterium tuberculosis (strain CDC 1551 / Oshkosh).